The chain runs to 316 residues: Ribosomal RNA small subunit methyltransferase H (316 aa).

Residues 35 to 37 (AGH), D55, F84, D105, and Q112 contribute to the S-adenosyl-L-methionine site.

It belongs to the methyltransferase superfamily. RsmH family.

It localises to the cytoplasm. The catalysed reaction is cytidine(1402) in 16S rRNA + S-adenosyl-L-methionine = N(4)-methylcytidine(1402) in 16S rRNA + S-adenosyl-L-homocysteine + H(+). Functionally, specifically methylates the N4 position of cytidine in position 1402 (C1402) of 16S rRNA. In Streptococcus pneumoniae (strain ATCC 700669 / Spain 23F-1), this protein is Ribosomal RNA small subunit methyltransferase H.